A 508-amino-acid polypeptide reads, in one-letter code: Photosystem II CP47 reaction center protein (508 aa).

Transmembrane regions (helical) follow at residues 21–36 (AVHI…WAGS), 101–115 (IVFS…IWHW), 140–156 (GIHL…FGAF), 203–218 (IAAG…FHLS), 237–252 (VLSS…AFVV), and 457–472 (TFAL…HGAR).

Belongs to the PsbB/PsbC family. PsbB subfamily. As to quaternary structure, PSII is composed of 1 copy each of membrane proteins PsbA, PsbB, PsbC, PsbD, PsbE, PsbF, PsbH, PsbI, PsbJ, PsbK, PsbL, PsbM, PsbT, PsbX, PsbY, PsbZ, Psb30/Ycf12, at least 3 peripheral proteins of the oxygen-evolving complex and a large number of cofactors. It forms dimeric complexes. The cofactor is Binds multiple chlorophylls. PSII binds additional chlorophylls, carotenoids and specific lipids..

The protein resides in the plastid. It is found in the chloroplast thylakoid membrane. Functionally, one of the components of the core complex of photosystem II (PSII). It binds chlorophyll and helps catalyze the primary light-induced photochemical processes of PSII. PSII is a light-driven water:plastoquinone oxidoreductase, using light energy to abstract electrons from H(2)O, generating O(2) and a proton gradient subsequently used for ATP formation. The polypeptide is Photosystem II CP47 reaction center protein (Agrostis stolonifera (Creeping bentgrass)).